The primary structure comprises 147 residues: Large ribosomal subunit protein bL9 (147 aa).

The protein belongs to the bacterial ribosomal protein bL9 family.

Binds to the 23S rRNA. The sequence is that of Large ribosomal subunit protein bL9 from Bdellovibrio bacteriovorus (strain ATCC 15356 / DSM 50701 / NCIMB 9529 / HD100).